Here is a 508-residue protein sequence, read N- to C-terminus: UTP--glucose-1-phosphate uridylyltransferase (508 aa).

An N-acetylserine modification is found at serine 2. Residues serine 2 and serine 13 each carry the phosphoserine modification. UTP is bound by residues 113 to 116 (LNGG), lysine 127, glutamine 190, and glycine 222. A substrate-binding site is contributed by 115–116 (GG). Lysine 127 lines the Mg(2+) pocket. Residues histidine 223, 251 to 253 (NID), and asparagine 330 contribute to the substrate site. Residue aspartate 253 participates in UTP binding. Aspartate 253 contributes to the Mg(2+) binding site. Lysine 396 provides a ligand contact to UTP. Residue lysine 396 is part of the active site. Threonine 426 is subject to Phosphothreonine. Phosphoserine is present on serine 434. Lysine 438 carries the post-translational modification N6-acetyllysine. Residues serine 448 and serine 461 each carry the phosphoserine modification. The tract at residues 457-508 (HLTVSGDVTFGKNVSLKGTVIIIANHGDRIDIPPGAVLENKIVSGNLRILDH) is oligomerization. The critical for end-to-end subunit interaction stretch occupies residues 502-503 (NL).

Belongs to the UDPGP type 1 family. As to quaternary structure, homooctamer. Highly expressed in various brain regions. Expressed in amygdala, anterior cingulate cortex, caudate, cerebellar hemisphere, cerebellum, cortex, frontal cortex, hippocampus, hypothalamus, nucleus accumbens, putamen, spinal cord and substantia nigra. Also widely expressed among other tissues, including liver, heart, placenta, lung, kidney, pancreas and skeletal muscle.

The protein resides in the cytoplasm. The catalysed reaction is alpha-D-glucose 1-phosphate + UTP + H(+) = UDP-alpha-D-glucose + diphosphate. The protein operates within glycan biosynthesis; glycogen biosynthesis. In terms of biological role, UTP--glucose-1-phosphate uridylyltransferase catalyzing the conversion of glucose-1-phosphate into UDP-glucose, a crucial precursor for the production of glycogen. This is UTP--glucose-1-phosphate uridylyltransferase from Homo sapiens (Human).